A 119-amino-acid polypeptide reads, in one-letter code: Large ribosomal subunit protein uL18 (119 aa).

The protein belongs to the universal ribosomal protein uL18 family. In terms of assembly, part of the 50S ribosomal subunit; part of the 5S rRNA/L5/L18/L25 subcomplex. Contacts the 5S and 23S rRNAs.

In terms of biological role, this is one of the proteins that bind and probably mediate the attachment of the 5S RNA into the large ribosomal subunit, where it forms part of the central protuberance. This is Large ribosomal subunit protein uL18 from Tropheryma whipplei (strain TW08/27) (Whipple's bacillus).